Reading from the N-terminus, the 234-residue chain is Segregation and condensation protein A (234 aa).

The protein belongs to the ScpA family. Component of a cohesin-like complex composed of ScpA, ScpB and the Smc homodimer, in which ScpA and ScpB bind to the head domain of Smc. The presence of the three proteins is required for the association of the complex with DNA.

The protein localises to the cytoplasm. Its function is as follows. Participates in chromosomal partition during cell division. May act via the formation of a condensin-like complex containing Smc and ScpB that pull DNA away from mid-cell into both cell halves. In Streptococcus pyogenes serotype M12 (strain MGAS2096), this protein is Segregation and condensation protein A.